Consider the following 333-residue polypeptide: Phenylalanine--tRNA ligase alpha subunit (333 aa).

Residue glutamate 254 coordinates Mg(2+).

This sequence belongs to the class-II aminoacyl-tRNA synthetase family. Phe-tRNA synthetase alpha subunit type 1 subfamily. As to quaternary structure, tetramer of two alpha and two beta subunits. The cofactor is Mg(2+).

It localises to the cytoplasm. The catalysed reaction is tRNA(Phe) + L-phenylalanine + ATP = L-phenylalanyl-tRNA(Phe) + AMP + diphosphate + H(+). The protein is Phenylalanine--tRNA ligase alpha subunit (pheS) of Xylella fastidiosa (strain 9a5c).